We begin with the raw amino-acid sequence, 206 residues long: Protein GET1 (206 aa).

Residues 1–4 (MPSL) lie on the Lumenal side of the membrane. A helical transmembrane segment spans residues 5–24 (LITALFLNVIIYVINTVGAA). The Cytoplasmic portion of the chain corresponds to 25–110 (TVDGLLWLLY…TFDITIKIAR (86 aa)). Residues 75-100 (AKLRRRHDKALEAYEAKNNELTQSKS) are a coiled coil. A helical membrane pass occupies residues 111 to 131 (WAATSGLMLFLQFWYSKTPIF). The Lumenal portion of the chain corresponds to 132–155 (TLPPGWIPWQVQWVLSFPRAPMGT). The chain crosses the membrane as a helical span at residues 156–172 (VSIQIWSGACATVVALV). Over 173 to 206 (GDAMKASLAYVSKPKIDRIKLGATMEGKEGKKRQ) the chain is Cytoplasmic.

Belongs to the WRB/GET1 family. In terms of assembly, interacts with GET3.

The protein resides in the endoplasmic reticulum membrane. Its function is as follows. Required for the post-translational delivery of tail-anchored (TA) proteins to the endoplasmic reticulum. Acts as a membrane receptor for soluble GET3, which recognizes and selectively binds the transmembrane domain of TA proteins in the cytosol. In Ajellomyces capsulatus (strain H143) (Darling's disease fungus), this protein is Protein GET1.